The following is a 90-amino-acid chain: Bombyxin B-5 (90 aa).

An N-terminal signal peptide occupies residues 1-20; the sequence is MMKTAVMFILVVVISLTYSS. 3 cysteine pairs are disulfide-bonded: cysteine 30/cysteine 75, cysteine 42/cysteine 88, and cysteine 74/cysteine 79. The propeptide at 49-64 is c peptide like; sequence GGAQYAPYWQETYLRS.

Belongs to the insulin family. Heterodimer of a B chain and an A chain linked by two disulfide bonds.

The protein resides in the secreted. Functionally, brain peptide responsible for activation of prothoracic glands to produce ecdysone in insects. This is Bombyxin B-5 (BBXB5) from Bombyx mori (Silk moth).